Consider the following 225-residue polypeptide: Ribose-5-phosphate isomerase A (225 aa).

Substrate is bound by residues 27–30 (SGST), 82–85 (DGAD), and 95–98 (KGGG). E104 functions as the Proton acceptor in the catalytic mechanism. Residue K122 coordinates substrate.

The protein belongs to the ribose 5-phosphate isomerase family. In terms of assembly, homodimer.

It carries out the reaction aldehydo-D-ribose 5-phosphate = D-ribulose 5-phosphate. Its pathway is carbohydrate degradation; pentose phosphate pathway; D-ribose 5-phosphate from D-ribulose 5-phosphate (non-oxidative stage): step 1/1. Catalyzes the reversible conversion of ribose-5-phosphate to ribulose 5-phosphate. This is Ribose-5-phosphate isomerase A from Archaeoglobus fulgidus (strain ATCC 49558 / DSM 4304 / JCM 9628 / NBRC 100126 / VC-16).